The chain runs to 135 residues: Salivary protein 15 (135 aa).

An N-terminal signal peptide occupies residues 1-21 (MESFVAMKVVCILFLVGVVAA). Asparagine 22 is a glycosylation site (N-linked (GlcNAc...) asparagine). A required for Borrelia OspC-binding region spans residues 48-67 (PNYISNHQKLALKLLKICKD). Asparagine 92 and asparagine 104 each carry an N-linked (GlcNAc...) asparagine glycan. The tract at residues 116–135 (GPNGQTCAEKNKCVGHIPGC) is CD4-binding.

Belongs to the salp15 family. In terms of assembly, monomer. Interacts with host CD4. Interacts with host DC-SIGN (CD209). As to quaternary structure, (Microbial infection) Interacts with Borrelia outer surface protein C (OspC). In terms of processing, glycosylated. In terms of tissue distribution, expressed in salivary glands. Detected in host skin, at the site of natural inoculation.

The protein localises to the secreted. Functionally, salivary tick protein that downregulates host immune system by binding to both dendritic cells, and CD4(+) T cells. Specifically binds to the CD4 coreceptor on T cells. This interaction prevents the activation of the Src kinase, Lck, and its downstream substrate Zap-70, and results in deficient activation of PLCgamma1, the repression of calcium fluxes triggered by T-cell antigen receptor (TCR) ligation, and a subsequent reduction in interleukin-2 production. This salivary protein also binds to DC-SIGN (CD209) on dendritic cells (DC) and activates the Raf-1 kinase/MEK signaling pathway that results in down-regulating expression of pro-inflammatory cytokines. Furthermore, it inhibits T cell proliferation induced by DCs. It also inhibits in vitro keratinocyte inflammation induced by Borrelia burgdorferi or by the major outer surface protein (OspC) of Borrelia. In addition, it downregulates chemokines and monocyte chemoattractant protein 1, as well as several antimicrobial peptides such as defensins, cathelicidin, psoriasin, and RNase 7. Apart from its immunomodulatory activities, it is also associated with protection of Borrelia spirochetes from antibody-mediated killing through its binding to OspC. In vivo, tests on different immune disease animal models show promising therapeutic results, e.g., in inhibiting HIV infection, experimental autoimmune encephalomyelitis, transplantation rejection, and asthma. Its function is as follows. (Microbial infection) Protects Borrelia garinii (strains A87S and VSBP) from host complement-mediated killing. (Microbial infection) Partially protects Borrelia burgdorferi (strains VS215 and B31) from host complement-mediated killing. This is Salivary protein 15 from Ixodes scapularis (Black-legged tick).